The sequence spans 497 residues: Alkene monooxygenase system, oxygenase component subunit alpha (497 aa).

Positions 104, 134, 137, 197, 231, and 234 each coordinate Fe cation.

This sequence belongs to the TmoA/XamoA family. The alkene monooxygenase multicomponent enzyme system is composed of an electron transfer component and a monooxygenase component interacting with the effector protein XamoD. The electron transfer component is composed of a ferredoxin reductase (XamoF) and a ferredoxin (XamoC), and the monooxygenase component is formed by a heterohexamer (dimer of heterotrimers) of two alpha subunits (XamoA), two beta subunits (XamoE) and two gamma subunits (XamoB). Fe(2+) is required as a cofactor.

It is found in the cytoplasm. It catalyses the reaction propene + NADH + O2 + H(+) = 1,2-epoxypropane + NAD(+) + H2O. With respect to regulation, inhibited by propyne. Functionally, component of the alkene monooxygenase multicomponent enzyme system which catalyzes the O2- and NADH-dependent epoxidation of short chain (C2 to C6) alkenes to their corresponding epoxides. Also able to catalyze the oxidation of a number of chlorinated alkenes, including trichloroethylene, cis- and trans-1,2-dichloroethylene, vinyl chloride, 1-chloropropylene, 1,3-dichloropropylene and 2,3-dichloropropylene. The protein is Alkene monooxygenase system, oxygenase component subunit alpha of Xanthobacter autotrophicus (strain ATCC BAA-1158 / Py2).